A 140-amino-acid chain; its full sequence is Nucleoside diphosphate kinase (140 aa).

Residues Lys-11, Phe-59, Arg-87, Thr-93, Arg-104, and Asn-114 each coordinate ATP. Residue His-117 is the Pros-phosphohistidine intermediate of the active site.

Belongs to the NDK family. Homotetramer. Mg(2+) serves as cofactor.

The protein resides in the cytoplasm. It catalyses the reaction a 2'-deoxyribonucleoside 5'-diphosphate + ATP = a 2'-deoxyribonucleoside 5'-triphosphate + ADP. The enzyme catalyses a ribonucleoside 5'-diphosphate + ATP = a ribonucleoside 5'-triphosphate + ADP. In terms of biological role, major role in the synthesis of nucleoside triphosphates other than ATP. The ATP gamma phosphate is transferred to the NDP beta phosphate via a ping-pong mechanism, using a phosphorylated active-site intermediate. In Rhizobium meliloti (strain 1021) (Ensifer meliloti), this protein is Nucleoside diphosphate kinase.